We begin with the raw amino-acid sequence, 298 residues long: Urease accessory protein UreD (298 aa).

The protein belongs to the UreD family. As to quaternary structure, ureD, UreF and UreG form a complex that acts as a GTP-hydrolysis-dependent molecular chaperone, activating the urease apoprotein by helping to assemble the nickel containing metallocenter of UreC. The UreE protein probably delivers the nickel.

It is found in the cytoplasm. Its function is as follows. Required for maturation of urease via the functional incorporation of the urease nickel metallocenter. The chain is Urease accessory protein UreD from Frankia alni (strain DSM 45986 / CECT 9034 / ACN14a).